An 86-amino-acid polypeptide reads, in one-letter code: Small ribosomal subunit protein bS20 (86 aa).

Over residues 1 to 22 (MANIKSAKKRAVQSEKRRKHNA) the composition is skewed to basic residues. The segment at 1-28 (MANIKSAKKRAVQSEKRRKHNASGRSMM) is disordered.

Belongs to the bacterial ribosomal protein bS20 family.

Functionally, binds directly to 16S ribosomal RNA. The chain is Small ribosomal subunit protein bS20 from Serratia proteamaculans (strain 568).